The chain runs to 363 residues: Aspartate carbamoyltransferase, chloroplastic (363 aa).

The interval 1-21 (MAAARATLPLPRVPAPSPRPQ) is disordered. A chloroplast-targeting transit peptide spans 1-36 (MAAARATLPLPRVPAPSPRPQLRPFPSLPARRGAVA). Over residues 11 to 21 (PRVPAPSPRPQ) the composition is skewed to pro residues. Residues arginine 109 and threonine 110 each contribute to the carbamoyl phosphate site. Positions 109 and 110 each coordinate UMP. Lysine 139 contacts L-aspartate. Arginine 160, histidine 188, and glutamine 191 together coordinate carbamoyl phosphate. UMP-binding residues include arginine 160 and histidine 188. Residues arginine 221 and arginine 283 each coordinate UMP. The L-aspartate site is built by arginine 221 and arginine 283. Positions 323 and 324 each coordinate carbamoyl phosphate.

Belongs to the aspartate/ornithine carbamoyltransferase superfamily. ATCase family. Homotrimer.

The protein localises to the plastid. Its subcellular location is the chloroplast. It carries out the reaction carbamoyl phosphate + L-aspartate = N-carbamoyl-L-aspartate + phosphate + H(+). Its pathway is pyrimidine metabolism; UMP biosynthesis via de novo pathway; (S)-dihydroorotate from bicarbonate: step 2/3. Its activity is regulated as follows. Feedback inhibited by UMP. In terms of biological role, catalyzes the condensation of carbamoyl phosphate and aspartate to form carbamoyl aspartate and inorganic phosphate, the committed step in the de novo pyrimidine nucleotide biosynthesis pathway. This Oryza sativa subsp. japonica (Rice) protein is Aspartate carbamoyltransferase, chloroplastic (PYRB).